The primary structure comprises 166 residues: MSEAAIAKKETLVQAAAEKFESAASVVIVDYRGLTVEEVTNLRKQLRDAGVEMKVIKNSILSRAAKKVGLDGLDEVFTGPTAVAFSNDDVVAPAKIIDEFAKDAKALEIKGGVIEGKVSSVEQITALAKLPNREGLLSMLLSVLQAPVRNVAYAVKAVAEKNEEVA.

The protein belongs to the universal ribosomal protein uL10 family. Part of the ribosomal stalk of the 50S ribosomal subunit. The N-terminus interacts with L11 and the large rRNA to form the base of the stalk. The C-terminus forms an elongated spine to which L12 dimers bind in a sequential fashion forming a multimeric L10(L12)X complex.

Functionally, forms part of the ribosomal stalk, playing a central role in the interaction of the ribosome with GTP-bound translation factors. The polypeptide is Large ribosomal subunit protein uL10 (Enterococcus faecalis (strain ATCC 700802 / V583)).